We begin with the raw amino-acid sequence, 260 residues long: Phosphate import ATP-binding protein PstB (260 aa).

In terms of domain architecture, ABC transporter spans 14–255; it reads IETENLNLFY…PKNTKTEEYI (242 aa). ATP is bound at residue 46–53; the sequence is GPSGCGKS.

The protein belongs to the ABC transporter superfamily. Phosphate importer (TC 3.A.1.7) family. In terms of assembly, the complex is composed of two ATP-binding proteins (PstB), two transmembrane proteins (PstC and PstA) and a solute-binding protein (PstS).

It localises to the cell inner membrane. It carries out the reaction phosphate(out) + ATP + H2O = ADP + 2 phosphate(in) + H(+). Its function is as follows. Part of the ABC transporter complex PstSACB involved in phosphate import. Responsible for energy coupling to the transport system. The polypeptide is Phosphate import ATP-binding protein PstB (Borreliella afzelii (strain PKo) (Borrelia afzelii)).